A 450-amino-acid polypeptide reads, in one-letter code: Tubulin beta-1 chain (450 aa).

Residues Gln-11, Glu-69, Ser-138, Gly-142, Thr-143, Gly-144, Asn-204, and Asn-226 each contribute to the GTP site. Glu-69 is a Mg(2+) binding site. A disordered region spans residues 426-450 (QDATADEDEYGEEEGDEEEYGQHDI). Acidic residues predominate over residues 429-444 (TADEDEYGEEEGDEEE).

The protein belongs to the tubulin family. In terms of assembly, dimer of alpha and beta chains. A typical microtubule is a hollow water-filled tube with an outer diameter of 25 nm and an inner diameter of 15 nM. Alpha-beta heterodimers associate head-to-tail to form protofilaments running lengthwise along the microtubule wall with the beta-tubulin subunit facing the microtubule plus end conferring a structural polarity. Microtubules usually have 13 protofilaments but different protofilament numbers can be found in some organisms and specialized cells. Mg(2+) serves as cofactor.

The protein localises to the cytoplasm. The protein resides in the cytoskeleton. In terms of biological role, tubulin is the major constituent of microtubules, a cylinder consisting of laterally associated linear protofilaments composed of alpha- and beta-tubulin heterodimers. Microtubules grow by the addition of GTP-tubulin dimers to the microtubule end, where a stabilizing cap forms. Below the cap, tubulin dimers are in GDP-bound state, owing to GTPase activity of alpha-tubulin. This chain is Tubulin beta-1 chain (TUBB1), found in Pisum sativum (Garden pea).